We begin with the raw amino-acid sequence, 236 residues long: Cysteine-rich venom protein TRI1 (236 aa).

The first 18 residues, 1–18 (MIVFILLSLAAVLEQSFG), serve as a signal peptide directing secretion. One can recognise an SCP domain in the interval 37–165 (VDRHNSFRRS…GYSYFYVCQY (129 aa)). Cystine bridges form between cysteine 74–cysteine 152, cysteine 91–cysteine 166, cysteine 147–cysteine 163, cysteine 185–cysteine 192, cysteine 188–cysteine 197, cysteine 201–cysteine 234, cysteine 210–cysteine 228, and cysteine 219–cysteine 232. The region spanning 201-234 (CLREDKFTNCKSLVQQNSCQHDWTRKNCPATCFC) is the ShKT domain.

The protein belongs to the CRISP family. As to expression, expressed by the venom gland.

It localises to the secreted. Its function is as follows. Blocks contraction of smooth muscle elicited by high potassium-induced depolarization, but does not block caffeine-stimulated contraction. May target voltage-gated calcium channels on smooth muscle. The sequence is that of Cysteine-rich venom protein TRI1 from Trimorphodon biscutatus (Western lyre snake).